Consider the following 256-residue polypeptide: Phosphatidylglycerol--prolipoprotein diacylglyceryl transferase (256 aa).

3 helical membrane-spanning segments follow: residues 19-39, 56-76, and 91-111; these read VHWYGLMYLIGFVSAWLLGYW, LIFYSALGVILGGRVGYMLFY, and IWEGGMSFHGGLLGVVIAAWL. A 1,2-diacyl-sn-glycero-3-phospho-(1'-sn-glycerol) is bound at residue Arg139. Residues 231–251 form a helical membrane-spanning segment; the sequence is FGWLTMGQVLSIPMLLIGIWL.

It belongs to the Lgt family.

The protein localises to the cell inner membrane. It carries out the reaction L-cysteinyl-[prolipoprotein] + a 1,2-diacyl-sn-glycero-3-phospho-(1'-sn-glycerol) = an S-1,2-diacyl-sn-glyceryl-L-cysteinyl-[prolipoprotein] + sn-glycerol 1-phosphate + H(+). The protein operates within protein modification; lipoprotein biosynthesis (diacylglyceryl transfer). Catalyzes the transfer of the diacylglyceryl group from phosphatidylglycerol to the sulfhydryl group of the N-terminal cysteine of a prolipoprotein, the first step in the formation of mature lipoproteins. This chain is Phosphatidylglycerol--prolipoprotein diacylglyceryl transferase, found in Legionella pneumophila (strain Lens).